The chain runs to 247 residues: 2,3-bisphosphoglycerate-dependent phosphoglycerate mutase (247 aa).

Substrate-binding positions include 8–15 (RHGESVWN), 21–22 (TG), Arg60, 87–90 (ERHY), Lys98, 114–115 (RR), and 183–184 (GN). The Tele-phosphohistidine intermediate role is filled by His9. Glu87 (proton donor/acceptor) is an active-site residue.

This sequence belongs to the phosphoglycerate mutase family. BPG-dependent PGAM subfamily. As to quaternary structure, homodimer.

It carries out the reaction (2R)-2-phosphoglycerate = (2R)-3-phosphoglycerate. It functions in the pathway carbohydrate degradation; glycolysis; pyruvate from D-glyceraldehyde 3-phosphate: step 3/5. Its function is as follows. Catalyzes the interconversion of 2-phosphoglycerate and 3-phosphoglycerate. In Geobacter sulfurreducens (strain ATCC 51573 / DSM 12127 / PCA), this protein is 2,3-bisphosphoglycerate-dependent phosphoglycerate mutase.